The chain runs to 678 residues: Catalase (678 aa).

The span at 1 to 26 (MSNEREMQNKKDQQLESFRVEDEGKK) shows a compositional bias: basic and acidic residues. Residues 1 to 32 (MSNEREMQNKKDQQLESFRVEDEGKKLTTNQG) form a disordered region. Active-site residues include histidine 75 and asparagine 148. Heme is bound at residue tyrosine 362.

Belongs to the catalase family. HPII subfamily. The cofactor is heme.

Its subcellular location is the cytoplasm. It carries out the reaction 2 H2O2 = O2 + 2 H2O. Functionally, decomposes hydrogen peroxide into water and oxygen; serves to protect cells from the toxic effects of hydrogen peroxide. This is Catalase (katE) from Alkalihalophilus pseudofirmus (strain ATCC BAA-2126 / JCM 17055 / OF4) (Bacillus pseudofirmus).